A 101-amino-acid chain; its full sequence is AFA-III adhesin operon regulatory protein (101 aa).

Regulates the transcription of genes involved in the biosynthesis of afimbrial adhesin-III. This Escherichia coli protein is AFA-III adhesin operon regulatory protein (afaA).